The chain runs to 263 residues: Ret finger protein-like 4B (263 aa).

An RING-type zinc finger spans residues 11 to 53 (CPVCLDFFSCSISLSCTHVFCFDCIQRYILENHDFRAMCPLCR). Residues 76–263 (HNSRLEQSLH…ESGNVLTICP (188 aa)) enclose the B30.2/SPRY domain.

This Homo sapiens (Human) protein is Ret finger protein-like 4B (RFPL4B).